Consider the following 614-residue polypeptide: ETS-related transcription factor Elf-1 (614 aa).

Residues Ser110, Ser163, Ser167, and Ser168 each carry the phosphoserine modification. Residues 159–199 (TYAHSPGPSSPEQPKRKKGRKTKPPRPDSPTTTPNISVKKK) form a disordered region. The segment covering 173-182 (KRKKGRKTKP) has biased composition (basic residues). Ser187 carries the phosphoserine modification. Thr190 carries the phosphothreonine modification. Residues 208–290 (IYLWEFLLAL…EGQRLVYQFK (83 aa)) constitute a DNA-binding region (ETS). Positions 303–371 (DPSCSIESSD…VQPSEALRTV (69 aa)) are disordered. Residues 310–335 (SSDPSLSSTATSSRNPASRSRASSSP) show a composition bias toward low complexity. The residue at position 430 (Ser430) is a Phosphoserine.

This sequence belongs to the ETS family. Binds to the underphosphorylated form of RB. May interact with other transcription factors in order to regulate specific genes. Interacts with RUNX1.

The protein localises to the nucleus. Functionally, transcription factor that activates the LYN and BLK promoters. The protein is ETS-related transcription factor Elf-1 (ELF1) of Bos taurus (Bovine).